The primary structure comprises 381 residues: Dual specificity protein phosphatase 6 (381 aa).

One can recognise a Rhodanese domain in the interval 30 to 148; it reads GNERLLLMDC…FQAEFALHCE (119 aa). Positions 176-203 are disordered; it reads SSSDIESDLDRDPNSATDSDGSPLSNSQ. Residues 189 to 203 show a composition bias toward polar residues; the sequence is NSATDSDGSPLSNSQ. Positions 206–349 constitute a Tyrosine-protein phosphatase domain; the sequence is FPVEILPFLY…LLDFERTLGL (144 aa). The active-site Phosphocysteine intermediate is the Cys293.

Belongs to the protein-tyrosine phosphatase family. Non-receptor class dual specificity subfamily. In terms of assembly, interacts with MAPK1/ERK2. In terms of processing, ubiquitinated by the SCF(FBXO31) complex, leading to its proteasomal degradation.

The protein resides in the cytoplasm. It catalyses the reaction O-phospho-L-tyrosyl-[protein] + H2O = L-tyrosyl-[protein] + phosphate. The catalysed reaction is O-phospho-L-seryl-[protein] + H2O = L-seryl-[protein] + phosphate. It carries out the reaction O-phospho-L-threonyl-[protein] + H2O = L-threonyl-[protein] + phosphate. Functionally, dual specificity protein phosphatase, which mediates dephosphorylation and inactivation of MAP kinases. Has a specificity for the ERK family. Plays an important role in alleviating acute postoperative pain. Necessary for the normal dephosphorylation of the long-lasting phosphorylated forms of spinal MAPK1/3 and MAP kinase p38 induced by peripheral surgery, which drives the resolution of acute postoperative allodynia. Also important for dephosphorylation of MAPK1/3 in local wound tissue, which further contributes to resolution of acute pain. This chain is Dual specificity protein phosphatase 6 (Dusp6), found in Mus musculus (Mouse).